The following is a 1737-amino-acid chain: Intraflagellar transport protein osm-1 (1737 aa).

WD repeat units follow at residues D14–F53, G63–K103, V110–K150, T151–I189, T191–D229, Q233–G273, and D511–T553. TPR repeat units lie at residues N700–Y737, S803–I836, V848–V881, T907–I940, H979–L1012, R1037–Y1070, and G1137–V1170.

Belongs to the IFT172 family. As to quaternary structure, component of the IFT complex B composed of at least che-2, che-13, dyf-1, dyf-3, dyf-6, dyf-11, dyf-13, ift-20, ift-74, ift-81, ifta-2, osm-1, osm-5 and osm-6. In terms of tissue distribution, expressed in amphid and phasmid chemosensory neurons, where it appears to concentrate at the base of the transition zones, which correspond to the basal bodies of motile and sensory cilia. Moves in the retrograde direction along cilia and dendrites, suggesting that it is retrieved from the distal endings of the cilia by a retrograde transport pathway that moves it along cilia and then dendrites, back to the neuronal cell body.

The protein localises to the cell projection. The protein resides in the cilium. In terms of biological role, component of the intraflagellar transport (IFT) complex B required for transport of proteins in the motile cilium. May be required for ciliary entrance and transport of specific ciliary cargo proteins such as che-3 which are related to motility. Required for the maintenance and formation of chemosensory cilia that detect chemosensory cues. The polypeptide is Intraflagellar transport protein osm-1 (Caenorhabditis elegans).